The primary structure comprises 342 residues: Phomopsin biosynthesis cluster protein B' (342 aa).

A disordered region spans residues 1 to 22; the sequence is MESIAKAKSLPNKGRTYDSQRP. The chain crosses the membrane as a helical span at residues 87-107; that stretch reads VLIIGCAVISLFAIIGALGFA. The segment at 118–186 is disordered; it reads CASPAHQNPH…QCGESPDEAQ (69 aa). A compositionally biased stretch (low complexity) spans 144 to 155; sequence HSGSHSSSSSTN. A glycan (N-linked (GlcNAc...) asparagine) is linked at asparagine 248.

The protein resides in the membrane. In terms of biological role, part of the gene cluster that mediates the biosynthesis of the phomopsins, a group of hexapeptide mycotoxins which infects lupins and causes lupinosis disease in livestock. The role of phomB' within the phomopsins biosynthesis pathway has still to be determined. The pathway starts with the processing of the precursor phomA by several endopeptidases including kexin proteases as well as the cluster-specific S41 family peptidase phomP1 and the oligopeptidase phomG to produce 10 identical copies of the hexapeptide Tyr-Val-Ile-Pro-Ile-Asp. After being excised from the precursor peptide, the core peptides are cyclized and modified post-translationally by enzymes encoded within the gene cluster. The timing and order of proteolysis of the phomA precursor and PTMs are still unknown. Two tyrosinase-like enzymes, phomQ1 and phomQ2, catalyze the chlorination and hydroxylation of Tyr, respectively. PhomYb, is proposed to be involved in the construction of the macrocyclic structure. The other 4 ustYa family proteins may be involved in PTMs that generate the unique structure of phomopsin A. PhomYa is required for the hydroxylation of C-beta of Tyr. PhomYc, phomYd, and phomYe are responsible for the biosynthesis of 2,3-dehydroisoleucine (dIle), 2,3-dehydroaspartic acid (dAsp), and 3,4-dehydroproline (dPro), respectively. While dIle formation by phomYc is indispensable for the installation of dAsp by phomYd, the order of the other PTMs have not been elucidated yet. Most of the biosynthetic enzymes likely have broad substrate specificity, and thus, there might be a metabolic grid from a precursor to phomopsin A. The enzyme(s) responsible for the biosynthesis of 3,4-dehydrovaline (dVal) have also not been identified yet. Finally, phomM acts as an S-adenosylmethionine-dependent alpha-N-methyltransferase that catalyzes two successive N-methylation reactions, converting N-desmethyl-phomopsin A to phomopsin A and phomopsin A further to an N,N-dimethylated congener called phomopsin E. In Diaporthe leptostromiformis (Lupinosis disease fungus), this protein is Phomopsin biosynthesis cluster protein B'.